We begin with the raw amino-acid sequence, 386 residues long: MAP kinase-activated protein kinase 2 (386 aa).

The segment at 1–29 (MLSGSPGQTPPAPFPSPPPPAPAQPPPPF) is disordered. Residues 8 to 29 (QTPPAPFPSPPPPAPAQPPPPF) are compositionally biased toward pro residues. A Protein kinase domain is found at 50 to 311 (KVTSQVLGLG…ITEFMNHPWI (262 aa)). ATP-binding positions include 56–64 (LGLGINGKV) and lysine 79. Position 125–127 (125–127 (ECL)) interacts with staurosporine. Aspartate 172 serves as the catalytic Proton acceptor. Phosphothreonine; by MAPK14 is present on threonine 208. At serine 258 the chain carries Phosphoserine; by MAPK14. Serine 314 bears the Phosphoserine; by autocatalysis mark. The interval 314-350 (STKVPQTPLHTSRVLKEDKERWEDVKEEMTSALATMR) is autoinhibitory helix. Threonine 320 is modified (phosphothreonine; by MAPK14). 2 consecutive short sequence motifs (nuclear export signal (NES)) follow at residues 331-354 (DKER…VDYE) and 342-351 (MTSALATMRV). A Glycyl lysine isopeptide (Lys-Gly) (interchain with G-Cter in SUMO) cross-link involves residue lysine 339. The interval 352–376 (DYEQIKIKKIEDASNPLLLKRRKKA) is p38 MAPK-binding site. 2 short sequence motifs (bipartite nuclear localization signal) span residues 357 to 360 (KIKK) and 371 to 375 (KRRKK).

It belongs to the protein kinase superfamily. CAMK Ser/Thr protein kinase family. As to quaternary structure, heterodimer with p38-alpha/MAPK14; this heterodimer forms a stable complex: molecules are positioned 'face to face' so that the ATP-binding sites of both kinases are at the heterodimer interface. Interacts with PHC2. Interacts with HSF1. Post-translationally, sumoylation inhibits the protein kinase activity. Phosphorylated and activated by MAP kinase p38-alpha/MAPK14 at Thr-208; Ser-258 and Thr-320. In terms of tissue distribution, ubiquitously expressed (at protein level).

The protein localises to the cytoplasm. The protein resides in the nucleus. The catalysed reaction is L-seryl-[protein] + ATP = O-phospho-L-seryl-[protein] + ADP + H(+). It carries out the reaction L-threonyl-[protein] + ATP = O-phospho-L-threonyl-[protein] + ADP + H(+). Activated following phosphorylation by p38-alpha/MAPK14 following various stresses. Inhibited following sumoylation. Specifically inhibited by pyrrolopyridine inhibitors. In terms of biological role, stress-activated serine/threonine-protein kinase involved in cytokine production, endocytosis, reorganization of the cytoskeleton, cell migration, cell cycle control, chromatin remodeling, DNA damage response and transcriptional regulation. Following stress, it is phosphorylated and activated by MAP kinase p38-alpha/MAPK14, leading to phosphorylation of substrates. Phosphorylates serine in the peptide sequence, Hyd-X-R-X(2)-S, where Hyd is a large hydrophobic residue. Phosphorylates ALOX5, CDC25B, CDC25C, CEP131, ELAVL1, HNRNPA0, HSP27/HSPB1, KRT18, KRT20, LIMK1, LSP1, PABPC1, PARN, PDE4A, RCSD1, RPS6KA3, TAB3 and TTP/ZFP36. Phosphorylates HSF1; leading to the interaction with HSP90 proteins and inhibiting HSF1 homotrimerization, DNA-binding and transactivation activities. Mediates phosphorylation of HSP27/HSPB1 in response to stress, leading to dissociation of HSP27/HSPB1 from large small heat-shock protein (sHsps) oligomers and impairment of their chaperone activities and ability to protect against oxidative stress effectively. Involved in inflammatory response by regulating tumor necrosis factor (TNF) and IL6 production post-transcriptionally: acts by phosphorylating AU-rich elements (AREs)-binding proteins ELAVL1, HNRNPA0, PABPC1 and TTP/ZFP36, leading to regulation of the stability and translation of TNF and IL6 mRNAs. Phosphorylation of TTP/ZFP36, a major post-transcriptional regulator of TNF, promotes its binding to 14-3-3 proteins and reduces its ARE mRNA affinity leading to inhibition of dependent degradation of ARE-containing transcripts. Phosphorylates CEP131 in response to cellular stress following ultraviolet irradiation which promotes binding of CEP131 to 14-3-3 proteins and inhibits formation of novel centriolar satellites. Also involved in late G2/M checkpoint following DNA damage through a process of post-transcriptional mRNA stabilization: following DNA damage, relocalizes from nucleus to cytoplasm and phosphorylates HNRNPA0 and PARN, leading to stabilization of GADD45A mRNA. Involved in toll-like receptor signaling pathway (TLR) in dendritic cells: required for acute TLR-induced macropinocytosis by phosphorylating and activating RPS6KA3. This chain is MAP kinase-activated protein kinase 2 (Mapkapk2), found in Mus musculus (Mouse).